The sequence spans 331 residues: tRNA N6-adenosine threonylcarbamoyltransferase (331 aa).

Fe cation is bound by residues histidine 108 and histidine 112. Substrate-binding positions include 129-133 (LVSGG), aspartate 161, glutamate 178, and serine 258. Aspartate 286 lines the Fe cation pocket.

It belongs to the KAE1 / TsaD family. The cofactor is Fe(2+).

The protein localises to the cytoplasm. The catalysed reaction is L-threonylcarbamoyladenylate + adenosine(37) in tRNA = N(6)-L-threonylcarbamoyladenosine(37) in tRNA + AMP + H(+). Its function is as follows. Required for the formation of a threonylcarbamoyl group on adenosine at position 37 (t(6)A37) in tRNAs that read codons beginning with adenine. Is probably involved in the transfer of the threonylcarbamoyl moiety of threonylcarbamoyl-AMP (TC-AMP) to the N6 group of A37. The polypeptide is tRNA N6-adenosine threonylcarbamoyltransferase (Caldivirga maquilingensis (strain ATCC 700844 / DSM 13496 / JCM 10307 / IC-167)).